We begin with the raw amino-acid sequence, 476 residues long: RuvB-like helicase 2 (476 aa).

Residue 72–80 (VGPPSTGKT) coordinates ATP.

It belongs to the RuvB family. As to quaternary structure, may form heterododecamers with RVB1. Component of the SWR1 chromatin remodeling complex, the INO80 chromatin remodeling complex, and of the R2TP complex.

It localises to the nucleus. The catalysed reaction is ATP + H2O = ADP + phosphate + H(+). Functionally, DNA helicase which participates in several chromatin remodeling complexes, including the SWR1 and the INO80 complexes. The SWR1 complex mediates the ATP-dependent exchange of histone H2A for the H2A variant HZT1 leading to transcriptional regulation of selected genes by chromatin remodeling. The INO80 complex remodels chromatin by shifting nucleosomes and is involved in DNA repair. Also involved in pre-rRNA processing. The protein is RuvB-like helicase 2 (RVB2) of Mycosarcoma maydis (Corn smut fungus).